Reading from the N-terminus, the 166-residue chain is Endoribonuclease YbeY (166 aa).

The Zn(2+) site is built by His-126, His-130, and His-136.

This sequence belongs to the endoribonuclease YbeY family. The cofactor is Zn(2+).

It localises to the cytoplasm. Functionally, single strand-specific metallo-endoribonuclease involved in late-stage 70S ribosome quality control and in maturation of the 3' terminus of the 16S rRNA. This chain is Endoribonuclease YbeY, found in Laribacter hongkongensis (strain HLHK9).